The chain runs to 96 residues: Large ribosomal subunit protein bL27 (96 aa).

A propeptide spanning residues 1–9 (MLRLDLQFF) is cleaved from the precursor. Residues 14–35 (GVGSTKNGRDSQSKRLGAKRAD) are disordered.

The protein belongs to the bacterial ribosomal protein bL27 family. In terms of processing, the N-terminus is cleaved by ribosomal processing cysteine protease Prp.

This is Large ribosomal subunit protein bL27 from Bacillus cytotoxicus (strain DSM 22905 / CIP 110041 / 391-98 / NVH 391-98).